Consider the following 384-residue polypeptide: Soluble hydrogenase, small subunit (384 aa).

Lys194 is modified (N6-(pyridoxal phosphate)lysine).

The protein belongs to the class-V pyridoxal-phosphate-dependent aminotransferase family. In terms of assembly, heterodimer of a large and a small subunit. It depends on pyridoxal 5'-phosphate as a cofactor.

It is found in the cytoplasm. In terms of biological role, soluble hydrogenase catalyzes both production and consumption of hydrogen from suitable artificial electron donors or acceptors. This subunit catalyzes the tritium-exchange activity. The chain is Soluble hydrogenase, small subunit from Synechococcus sp. (strain PCC 6716).